Here is a 74-residue protein sequence, read N- to C-terminus: Peptide Im-4 (74 aa).

An N-terminal signal peptide occupies residues 1 to 22; the sequence is MKFQYLLAIFMIVLVVTDHCQA. Lys-39 carries the post-translational modification Lysine amide; partial. Residues 40–74 constitute a propeptide that is removed on maturation; sequence GRRRRQLEARYEPQQRNFRKREIDFEKLFANMPDY.

The protein belongs to the non-disulfide-bridged peptide (NDBP) superfamily. Short antimicrobial peptide (group 4) family. In terms of tissue distribution, expressed by the venom gland.

The protein localises to the secreted. Its subcellular location is the target cell membrane. Its function is as follows. Antimicrobial peptide that probably forms pores in target membranes. Has antibacterial activity against Gram-positive bacteria S.aureus NBRC 13276 (MIC=5-10 uM) and B.subtilis NBRC 3009 (MIC=2.5-5 uM) but not against Gram-negative bacterium E.coli NBRC 3972. This is Peptide Im-4 from Isometrus maculatus (Lesser brown scorpion).